Consider the following 515-residue polypeptide: Protein nucleotidyltransferase YdiU (515 aa).

ATP contacts are provided by G101, G103, R104, K124, D136, G137, R194, and R201. Catalysis depends on D269, which acts as the Proton acceptor. N270 and D279 together coordinate Mg(2+). D279 serves as a coordination point for ATP.

Belongs to the SELO family. Requires Mg(2+) as cofactor. The cofactor is Mn(2+).

It catalyses the reaction L-seryl-[protein] + ATP = 3-O-(5'-adenylyl)-L-seryl-[protein] + diphosphate. The enzyme catalyses L-threonyl-[protein] + ATP = 3-O-(5'-adenylyl)-L-threonyl-[protein] + diphosphate. It carries out the reaction L-tyrosyl-[protein] + ATP = O-(5'-adenylyl)-L-tyrosyl-[protein] + diphosphate. The catalysed reaction is L-histidyl-[protein] + UTP = N(tele)-(5'-uridylyl)-L-histidyl-[protein] + diphosphate. It catalyses the reaction L-seryl-[protein] + UTP = O-(5'-uridylyl)-L-seryl-[protein] + diphosphate. The enzyme catalyses L-tyrosyl-[protein] + UTP = O-(5'-uridylyl)-L-tyrosyl-[protein] + diphosphate. Functionally, nucleotidyltransferase involved in the post-translational modification of proteins. It can catalyze the addition of adenosine monophosphate (AMP) or uridine monophosphate (UMP) to a protein, resulting in modifications known as AMPylation and UMPylation. The protein is Protein nucleotidyltransferase YdiU of Cytophaga hutchinsonii (strain ATCC 33406 / DSM 1761 / CIP 103989 / NBRC 15051 / NCIMB 9469 / D465).